Here is a 446-residue protein sequence, read N- to C-terminus: CBL-interacting protein kinase 8 (446 aa).

In terms of domain architecture, Protein kinase spans 13–266 (YEVGRTIGEG…IEEIRNDEWF (254 aa)). ATP contacts are provided by residues 19–27 (IGEGTFAKV) and Lys-42. Asp-136 acts as the Proton acceptor in catalysis. The activation loop stretch occupies residues 154-181 (DFGLSAWPAQGGALLRTTCGTPNYVAPE). Residues 301 to 329 (LDDEAGPLTLNAFDLIILSQGLNLAALFD) enclose the NAF domain. The interval 336 to 365 (KLQNRFLSRKPAKVIMSSMEVVAQSMGYKT) is PPI.

It belongs to the protein kinase superfamily. CAMK Ser/Thr protein kinase family. SNF1 subfamily. It depends on Mn(2+) as a cofactor.

It catalyses the reaction L-seryl-[protein] + ATP = O-phospho-L-seryl-[protein] + ADP + H(+). The enzyme catalyses L-threonyl-[protein] + ATP = O-phospho-L-threonyl-[protein] + ADP + H(+). Its function is as follows. CIPK serine-threonine protein kinases interact with CBL proteins. Binding of a CBL protein to the regulatory NAF domain of CIPK protein lead to the activation of the kinase in a calcium-dependent manner. This chain is CBL-interacting protein kinase 8 (CIPK8), found in Oryza sativa subsp. japonica (Rice).